The chain runs to 80 residues: Exodeoxyribonuclease 7 small subunit (80 aa).

The protein belongs to the XseB family. Heterooligomer composed of large and small subunits.

It localises to the cytoplasm. The enzyme catalyses Exonucleolytic cleavage in either 5'- to 3'- or 3'- to 5'-direction to yield nucleoside 5'-phosphates.. In terms of biological role, bidirectionally degrades single-stranded DNA into large acid-insoluble oligonucleotides, which are then degraded further into small acid-soluble oligonucleotides. In Pseudomonas fluorescens (strain ATCC BAA-477 / NRRL B-23932 / Pf-5), this protein is Exodeoxyribonuclease 7 small subunit.